The primary structure comprises 43 residues: Large ribosomal subunit protein bL32 (43 aa).

Belongs to the bacterial ribosomal protein bL32 family.

The chain is Large ribosomal subunit protein bL32 (rpmF) from Carsonella ruddii (strain PV).